A 497-amino-acid chain; its full sequence is Guanosine-5'-triphosphate,3'-diphosphate pyrophosphatase (497 aa).

This sequence belongs to the GppA/Ppx family. GppA subfamily.

It catalyses the reaction guanosine 3'-diphosphate 5'-triphosphate + H2O = guanosine 3',5'-bis(diphosphate) + phosphate + H(+). It participates in purine metabolism; ppGpp biosynthesis; ppGpp from GTP: step 2/2. Catalyzes the conversion of pppGpp to ppGpp. Guanosine pentaphosphate (pppGpp) is a cytoplasmic signaling molecule which together with ppGpp controls the 'stringent response', an adaptive process that allows bacteria to respond to amino acid starvation, resulting in the coordinated regulation of numerous cellular activities. The sequence is that of Guanosine-5'-triphosphate,3'-diphosphate pyrophosphatase from Vibrio vulnificus (strain YJ016).